Here is a 512-residue protein sequence, read N- to C-terminus: SNF1-related protein kinase catalytic subunit alpha KIN11 (512 aa).

In terms of domain architecture, Protein kinase spans Tyr-20–Phe-272. ATP is bound by residues Leu-26–Val-34 and Lys-49. Asp-143 acts as the Proton acceptor in catalysis. A Phosphoserine modification is found at Ser-165. Thr-176 bears the Phosphothreonine; by GRIK1 or GRIK2 mark. Residues Ala-291–Arg-391 form an auto-inhibitory domain (AID) region. One can recognise a UBA domain in the interval Lys-293–Asp-333. The regulatory domain (RD) stretch occupies residues Asn-295–Ile-512. Positions Lys-392–Ile-512 are PPI. Residues Ser-399–Ile-512 form an interaction with PAD1 and SKP1 region. The KA1 domain maps to Ala-463–Val-511.

This sequence belongs to the protein kinase superfamily. CAMK Ser/Thr protein kinase family. SNF1 subfamily. In terms of assembly, subunit of a probable heterotrimeric complex consisting of an alpha catalytic (KIN10 or KIN11) subunit, and a beta (KINB) and a gamma (KING or SNF4) non-catalytic regulatory subunits. Interacts with KINB2, KINB3, SNF4 and probably with KINB1 and KING1. Interacts with SKP1/ASK1, PAD1 and the N-terminus of PRL1. Potential subunit of a SCF ubiquitin ligase complex consisting of a SNF1-related protein kinase, SKP1 and CUL1. The association of the SCF complex with the proteasome may be mediated by PAD1 and seems to be inhibited by the interaction with PRL1. Interacts with DSP4. Interacts with the begomovirus AL2 protein and the curtovirus L2 protein. Interacts with ATAF1. Interacts with CIPK14. Interacts with FLZ proteins through their FLZ-type zinc finger domains. Interacts with GEBP/STKR1. Interacts with REM4.1 and REM4.2. Interacts with ADK2. Interacts with IDD8. Interacts with FLZ3, FLZ9, TCP3, TCP13, HB21/ZHD3 and HB23/ZHD10. Interacts with WRI1. Interacts with IPK2b. Interacts with FLZ6 and FLZ10. Sumoylated by SIZ1. In terms of processing, phosphorylated at Thr-176 under submergence. Autophosphorylated. Phosphorylated at Thr-176 by GRIK1/SNAK2 and GRIK2/SNAK1. As to expression, expressed in roots, shoots, flower buds, flowers, siliques and leaves. Restrictly expressed to the base of the leaf, the vascular tissue, and the hydathodes.

Its subcellular location is the plastid. The protein localises to the chloroplast. The protein resides in the cytoplasm. It localises to the endoplasmic reticulum. It catalyses the reaction L-seryl-[protein] + ATP = O-phospho-L-seryl-[protein] + ADP + H(+). It carries out the reaction L-threonyl-[protein] + ATP = O-phospho-L-threonyl-[protein] + ADP + H(+). Its activity is regulated as follows. Inactivated by the begomovirus AL2 protein or the curtovirus L2 protein. Activated by phosphorylation at Thr-176 by GRIK1/SNAK2 and GRIK2/SNAK1. Inhibited by trehalose-6-phosphate. Catalytic subunit of the probable trimeric SNF1-related protein kinase (SnRK) complex, a central regulator of cellular energy homeostasis, which, in response to seemingly unrelated darkness, sugar and stress conditions, activates energy-producing pathways and inhibits energy-consuming processes. May play a role in a signal transduction cascade regulating gene expression and carbohydrate metabolism in higher plants. The SnRK complex may also be involved in the regulation of fatty acid synthesis by phosphorylation of acetyl-CoA carboxylase and in assimilation of nitrogen by phosphorylating nitrate reductase. In vitro, KIN11 exhibits kinase activity on sucrose phosphate synthase and the kinase activity is inhibited by PRL1. May be a subunit of a SCF ubiquitin ligase complex and thus be involved in proteasomal ubiquitination. Involved in innate antiviral defenses. Phosphorylates REM4.1 in vitro. Phosphorylates ADK2 in vitro. The polypeptide is SNF1-related protein kinase catalytic subunit alpha KIN11 (Arabidopsis thaliana (Mouse-ear cress)).